A 249-amino-acid chain; its full sequence is Cytoplasmic envelopment protein 1 (249 aa).

The protein belongs to the herpesviridae cytoplasmic envelopment protein 1 family.

The protein localises to the virion. The protein resides in the virion tegument. Its subcellular location is the host cytoplasm. It is found in the host Golgi apparatus. Its function is as follows. Plays a critical role in cytoplasmic virus egress. Participates in the final step of tegumentation and envelope acquisition within the host cytoplasm. This chain is Cytoplasmic envelopment protein 1 (UL103), found in Homo sapiens (Human).